The sequence spans 327 residues: Glycerol-3-phosphate dehydrogenase [NAD(P)+] (327 aa).

NADPH is bound by residues tryptophan 11, arginine 30, and lysine 103. Residues lysine 103, glycine 131, and serine 133 each contribute to the sn-glycerol 3-phosphate site. Alanine 135 is an NADPH binding site. Lysine 186, aspartate 243, serine 253, arginine 254, and asparagine 255 together coordinate sn-glycerol 3-phosphate. Lysine 186 serves as the catalytic Proton acceptor. Arginine 254 is an NADPH binding site. NADPH-binding residues include valine 281 and glutamate 283.

This sequence belongs to the NAD-dependent glycerol-3-phosphate dehydrogenase family.

The protein resides in the cytoplasm. It catalyses the reaction sn-glycerol 3-phosphate + NAD(+) = dihydroxyacetone phosphate + NADH + H(+). The enzyme catalyses sn-glycerol 3-phosphate + NADP(+) = dihydroxyacetone phosphate + NADPH + H(+). Its pathway is membrane lipid metabolism; glycerophospholipid metabolism. Catalyzes the reduction of the glycolytic intermediate dihydroxyacetone phosphate (DHAP) to sn-glycerol 3-phosphate (G3P), the key precursor for phospholipid synthesis. In Wolbachia sp. subsp. Drosophila simulans (strain wRi), this protein is Glycerol-3-phosphate dehydrogenase [NAD(P)+].